The following is a 101-amino-acid chain: Trp operon repressor homolog (101 aa).

Residues 59-82 (QREIAQKYGVSIAQITRGSNALKA) mediate DNA binding.

It belongs to the TrpR family. In terms of assembly, homodimer.

It localises to the cytoplasm. In terms of biological role, this protein is an aporepressor. When complexed with L-tryptophan it binds the operator region of the trp operon and prevents the initiation of transcription. In Chlamydia caviae (strain ATCC VR-813 / DSM 19441 / 03DC25 / GPIC) (Chlamydophila caviae), this protein is Trp operon repressor homolog.